Reading from the N-terminus, the 121-residue chain is Basic phospholipase A2 BmjeTX-I (121 aa).

Intrachain disulfides connect C26–C114, C28–C45, C44–C95, C50–C121, C51–C88, C58–C82, and C76–C86. Positions 27, 29, and 31 each coordinate Ca(2+). Residue H48 is part of the active site. D49 contacts Ca(2+). The active site involves D89.

Ca(2+) is required as a cofactor. As to expression, expressed by the venom gland.

The protein localises to the secreted. It catalyses the reaction a 1,2-diacyl-sn-glycero-3-phosphocholine + H2O = a 1-acyl-sn-glycero-3-phosphocholine + a fatty acid + H(+). In terms of biological role, snake venom phospholipase A2 (PLA2) that induces a slight blockade of neuromuscular contraction in an indirectly stimulated chick biventer cervicis nerve-muscle preparation. Does not inhibit contraction of chick biventer cervicic nerve-muscle preparation in response to treatment with acetylcholine or KCl. The neuromuscular blockade is mediated by inhibitory action at the presynaptic motor nerve endings. Lyses skeletal myoblasts and myotubes in vitro, and intramuscular injection causes local muscle necrosis. Induces edema in the mouse foot pad. Induces a transient increase of IL-6 levels. PLA2 catalyzes the calcium-dependent hydrolysis of the 2-acyl groups in 3-sn-phosphoglycerides. This Bothrops marajoensis (Marajo lancehead) protein is Basic phospholipase A2 BmjeTX-I.